The following is a 303-amino-acid chain: tRNA pseudouridine synthase B (303 aa).

The Nucleophile role is filled by Asp47.

Belongs to the pseudouridine synthase TruB family. Type 1 subfamily.

The enzyme catalyses uridine(55) in tRNA = pseudouridine(55) in tRNA. Its function is as follows. Responsible for synthesis of pseudouridine from uracil-55 in the psi GC loop of transfer RNAs. This Ruegeria pomeroyi (strain ATCC 700808 / DSM 15171 / DSS-3) (Silicibacter pomeroyi) protein is tRNA pseudouridine synthase B.